Here is a 212-residue protein sequence, read N- to C-terminus: Thymidylate kinase (212 aa).

11-18 (GPEGAGKT) lines the ATP pocket.

Belongs to the thymidylate kinase family.

It carries out the reaction dTMP + ATP = dTDP + ADP. Functionally, phosphorylation of dTMP to form dTDP in both de novo and salvage pathways of dTTP synthesis. The polypeptide is Thymidylate kinase (Streptococcus pneumoniae (strain CGSP14)).